Here is a 155-residue protein sequence, read N- to C-terminus: Biotin carboxyl carrier protein of acetyl-CoA carboxylase (155 aa).

The Biotinyl-binding domain maps to 72–155; that stretch reads AASDELSGHL…EFDEPLIVIE (84 aa). K121 bears the N6-biotinyllysine mark.

As to quaternary structure, homodimer.

It functions in the pathway lipid metabolism; fatty acid biosynthesis. Functionally, this protein is a component of the acetyl coenzyme A carboxylase complex; first, biotin carboxylase catalyzes the carboxylation of the carrier protein and then the transcarboxylase transfers the carboxyl group to form malonyl-CoA. This is Biotin carboxyl carrier protein of acetyl-CoA carboxylase (accB) from Haemophilus influenzae (strain ATCC 51907 / DSM 11121 / KW20 / Rd).